A 188-amino-acid chain; its full sequence is Adenine phosphoribosyltransferase (188 aa).

Belongs to the purine/pyrimidine phosphoribosyltransferase family. As to quaternary structure, homodimer.

It is found in the cytoplasm. The catalysed reaction is AMP + diphosphate = 5-phospho-alpha-D-ribose 1-diphosphate + adenine. It participates in purine metabolism; AMP biosynthesis via salvage pathway; AMP from adenine: step 1/1. Catalyzes a salvage reaction resulting in the formation of AMP, that is energically less costly than de novo synthesis. This is Adenine phosphoribosyltransferase from Burkholderia orbicola (strain MC0-3).